The chain runs to 213 residues: Protein FAM156A/FAM156B (213 aa).

An N-acetylmethionine modification is found at methionine 1. A disordered region spans residues 1 to 62; sequence MDPLQKRNPA…SQAVPLPEGL (62 aa). Polar residues predominate over residues 8–37; the sequence is NPASPSKSSPMTAAETSQEGPAPSQPSYSE. The residue at position 114 (serine 114) is a Phosphoserine. The chain crosses the membrane as a helical span at residues 154–170; sequence WETLVQGLSGLTLSLGT. Residues 165–198 are disordered; sequence TLSLGTNQPGPLPEAALQPQETEEKRQRERQQES. Residues 186-197 show a composition bias toward basic and acidic residues; that stretch reads TEEKRQRERQQE.

It is found in the membrane. The polypeptide is Protein FAM156A/FAM156B (FAM156A) (Homo sapiens (Human)).